Here is a 279-residue protein sequence, read N- to C-terminus: Biotin synthase (279 aa).

Residues 1–227 (MKVYLCAISN…NAMIMVAGGR (227 aa)) enclose the Radical SAM core domain. Residues Cys16, Cys20, and Cys23 each contribute to the [4Fe-4S] cluster site. 3 residues coordinate [2Fe-2S] cluster: Cys60, Cys95, and Cys153.

The protein belongs to the radical SAM superfamily. Biotin synthase family. In terms of assembly, homodimer. [4Fe-4S] cluster is required as a cofactor. Requires [2Fe-2S] cluster as cofactor.

The catalysed reaction is (4R,5S)-dethiobiotin + (sulfur carrier)-SH + 2 reduced [2Fe-2S]-[ferredoxin] + 2 S-adenosyl-L-methionine = (sulfur carrier)-H + biotin + 2 5'-deoxyadenosine + 2 L-methionine + 2 oxidized [2Fe-2S]-[ferredoxin]. It functions in the pathway cofactor biosynthesis; biotin biosynthesis; biotin from 7,8-diaminononanoate: step 2/2. In terms of biological role, catalyzes the conversion of dethiobiotin (DTB) to biotin by the insertion of a sulfur atom into dethiobiotin via a radical-based mechanism. The chain is Biotin synthase from Nitratiruptor sp. (strain SB155-2).